A 458-amino-acid chain; its full sequence is MKRNFDDFKQFIKCKKIGVVGIGISNKPLIDFLLKLGARVSAFDKKSPDEIGEVARELKEKNVDLVLGEKYLNDLSDFDIIFKTPSMRIDSPAFVKAKEKGAYITSEMEEFIRYCPAKIYGVTGSDGKTTTTTLMYNILKKQGYKSWIGGNIGTPLFSEVEEITPDDRVVIELSSFQLMTMNISPEVAVITNVSPNHLDIHKDMEEYIMAKKNIFKYQSNSDLLVLNKDNELTNSMTGEALGKVRQFSIKEKLNKGGYLNKDSLCIDGDEVCKLSEIKLKGMHNVENLLAAFCALKDDVNIESMREIATTFSGVEHRCEFVREINGVKYYNDSIASSPTRTLAGLKAFEKPVILIAGGYDKKIPFDILAEEGYSKIKTLVLMGATKYKIKEAFENLELKKHVHIPIIMANSLVEAVNSARKVSCRGDVVTLSPACASFDMFANFEIRGNMFKEIVNDM.

124-130 contacts ATP; sequence GSDGKTT.

The protein belongs to the MurCDEF family.

The protein localises to the cytoplasm. It catalyses the reaction UDP-N-acetyl-alpha-D-muramoyl-L-alanine + D-glutamate + ATP = UDP-N-acetyl-alpha-D-muramoyl-L-alanyl-D-glutamate + ADP + phosphate + H(+). It participates in cell wall biogenesis; peptidoglycan biosynthesis. Cell wall formation. Catalyzes the addition of glutamate to the nucleotide precursor UDP-N-acetylmuramoyl-L-alanine (UMA). The polypeptide is UDP-N-acetylmuramoylalanine--D-glutamate ligase (Clostridium kluyveri (strain NBRC 12016)).